Consider the following 381-residue polypeptide: Guanine nucleotide-binding protein G(olf) subunit alpha (381 aa).

The segment at M1–N25 is disordered. G2 is lipidated: N-palmitoyl glycine. The S-palmitoyl cysteine moiety is linked to residue C3. The segment covering T10 to N25 has biased composition (basic and acidic residues). Residues A41–L381 form the G-alpha domain. The tract at residues R44–T57 is G1 motif. E52, S53, G54, K55, S56, and T57 together coordinate GTP. Residue S56 coordinates Mg(2+). Phosphothreonine is present on T178. The interval D183–T191 is G2 motif. GTP contacts are provided by L185 and R186. Residue R188 is modified to ADP-ribosylarginine; by cholera toxin. Residue T191 participates in GTP binding. T191 and D210 together coordinate Mg(2+). The interval F206–R215 is G3 motif. Residues G213, N279, K280, D282, and A353 each coordinate GTP. The segment at I275 to D282 is G4 motif. Residues T351–T356 are G5 motif.

This sequence belongs to the G-alpha family. G(s) subfamily. In terms of assembly, g proteins are composed of 3 units; alpha, beta and gamma. The alpha chain contains the guanine nucleotide binding site. Interacts with GAS2L2. Interacts (GDP-bound form) with RIC8B (via C-terminus); promoting GNAL folding and association with the plasma membrane. In terms of tissue distribution, detected in olfactory neuroepithelium, brain, testis, and to a lower extent in retina, lung alveoli, spleen. Trace amounts where seen in kidney, adrenal gland and liver. Found to be expressed in all the insulinomas examined.

It localises to the cell membrane. The enzyme catalyses GTP + H2O = GDP + phosphate + H(+). In terms of biological role, guanine nucleotide-binding protein (G protein) involved as transducer in olfactory signal transduction controlled by G protein-coupled receptors (GPCRs). Contains the guanine nucleotide binding site and alternates between an active, GTP-bound state and an inactive, GDP-bound state. Signaling by an activated GPCR promotes GDP release and GTP binding. The alpha subunit has a low GTPase activity that converts bound GTP to GDP, thereby terminating the signal. Both GDP release and GTP hydrolysis are modulated by numerous regulatory proteins. GNAL/G(olf) alpha specifically mediates olfactory signal transduction within the olfactory neuroepithelium and the basal ganglia following GPCRs activation. Acts by promoting the specific activation of adenylyl cyclase ADCY3, resulting in increased levels of the signaling molecule cAMP. The polypeptide is Guanine nucleotide-binding protein G(olf) subunit alpha (Homo sapiens (Human)).